The primary structure comprises 247 residues: 5-oxoprolinase subunit A (247 aa).

This sequence belongs to the LamB/PxpA family. In terms of assembly, forms a complex composed of PxpA, PxpB and PxpC.

The enzyme catalyses 5-oxo-L-proline + ATP + 2 H2O = L-glutamate + ADP + phosphate + H(+). Functionally, catalyzes the cleavage of 5-oxoproline to form L-glutamate coupled to the hydrolysis of ATP to ADP and inorganic phosphate. The chain is 5-oxoprolinase subunit A from Klebsiella pneumoniae subsp. pneumoniae (strain ATCC 700721 / MGH 78578).